The following is a 524-amino-acid chain: uncharacterized protein (524 aa).

Residues 1–21 (MLLRSVWYKLGSLLIILPLTG) form the signal peptide. Residue Cys-22 is the site of N-palmitoyl cysteine attachment. Residue Cys-22 is the site of S-diacylglycerol cysteine attachment.

It belongs to the MG067/MG068/MG395 family.

The protein resides in the cell membrane. This is an uncharacterized protein from Mycoplasma pneumoniae (strain ATCC 29342 / M129 / Subtype 1) (Mycoplasmoides pneumoniae).